A 213-amino-acid chain; its full sequence is Uridine kinase (213 aa).

ATP is bound at residue 13-20 (GASASGKS).

The protein belongs to the uridine kinase family.

It localises to the cytoplasm. The enzyme catalyses uridine + ATP = UMP + ADP + H(+). The catalysed reaction is cytidine + ATP = CMP + ADP + H(+). It participates in pyrimidine metabolism; CTP biosynthesis via salvage pathway; CTP from cytidine: step 1/3. Its pathway is pyrimidine metabolism; UMP biosynthesis via salvage pathway; UMP from uridine: step 1/1. The protein is Uridine kinase of Histophilus somni (strain 129Pt) (Haemophilus somnus).